The sequence spans 555 residues: Transmembrane protein 87B (555 aa).

An N-terminal signal peptide occupies residues 1–42 (MVAACRSVAGLLPRRRRCFPARAPLLRVALCLLCWTPAAVRA). Topologically, residues 43–214 (VPELGLWLET…PHGYISASDW (172 aa)) are lumenal. N68 and N197 each carry an N-linked (GlcNAc...) asparagine glycan. A helical transmembrane segment spans residues 215-235 (PLMIFYMVMCIVYILYGILWL). At 236–247 (TWSACYWKDILR) the chain is on the cytoplasmic side. A helical membrane pass occupies residues 248–268 (IQFWIAAVIFLGMLEKAVFYS). Residues 269–299 (EYQNISNTGLSTQGLLIFAELISAIKRTLAR) are Lumenal-facing. A glycan (N-linked (GlcNAc...) asparagine) is linked at N272. The helical transmembrane segment at 300 to 320 (LLVIIVSLGYGIVKPRLGTVM) threads the bilayer. Residues 321–322 (HR) lie on the Cytoplasmic side of the membrane. A helical transmembrane segment spans residues 323-343 (VIGLGLLYLIFAAVEGVMRVI). Over 344 to 350 (GGSNHLA) the chain is Lumenal. A helical transmembrane segment spans residues 351 to 371 (VVLDDIILAVIDSIFVWFIFI). The Cytoplasmic segment spans residues 372–396 (SLAQTMKTLRLRKNTVKFSLYRHFK). The chain crosses the membrane as a helical span at residues 397-417 (NTLIFAVLASIVFMGWTTKTF). The Lumenal segment spans residues 418–429 (RIAKCQSDWMER). The helical transmembrane segment at 430-450 (WVDDAFWSFLFSLILIVIMFL) threads the bilayer. Over 451–555 (WRPSANNQRY…EKMFSSEKIM (105 aa)) the chain is Cytoplasmic. Phosphoserine is present on residues S469, S494, S496, and S534.

The protein belongs to the LU7TM family. TMEM87 subfamily.

It is found in the golgi apparatus membrane. Functionally, may be involved in retrograde transport from endosomes to the trans-Golgi network (TGN). The polypeptide is Transmembrane protein 87B (Homo sapiens (Human)).